We begin with the raw amino-acid sequence, 494 residues long: NADH-quinone oxidoreductase subunit N (494 aa).

A run of 14 helical transmembrane segments spans residues 9–29 (VIPEIFLAAATCAILLIDLFL), 36–56 (LTYVLSLATLVVCAVLSLSDF), 73–93 (PMSNLLKFCTYIAVGLTLVYS), 107–127 (LGGEFYILSLFTVLGQMVMMS), 131–151 (FLIIYLGLEIMSLSLYALVAF), 166–186 (FVLGALASGFLLYGISMLYGA), 209–229 (LIFGLVFVVAGLAFKLGAVPF), 241–261 (PTAVTLMLGGAPKLAAFAITI), 278–298 (MLTILSVLSMAIGNITAIMQT), 304–324 (LAYSTISQVGFILLGLLSGVV), 339–359 (MFYVITYVLTTLGMFGVIMLL), 382–402 (FAFVTLLLMFSLAGVPPVVGF), 416–436 (GQIWLAVVAVLFSLIGAFYYL), and 469–489 (ALLALGLVPGPLMTACAAAII).

This sequence belongs to the complex I subunit 2 family. As to quaternary structure, NDH-1 is composed of 14 different subunits. Subunits NuoA, H, J, K, L, M, N constitute the membrane sector of the complex.

It localises to the cell inner membrane. The catalysed reaction is a quinone + NADH + 5 H(+)(in) = a quinol + NAD(+) + 4 H(+)(out). Its function is as follows. NDH-1 shuttles electrons from NADH, via FMN and iron-sulfur (Fe-S) centers, to quinones in the respiratory chain. The immediate electron acceptor for the enzyme in this species is believed to be ubiquinone. Couples the redox reaction to proton translocation (for every two electrons transferred, four hydrogen ions are translocated across the cytoplasmic membrane), and thus conserves the redox energy in a proton gradient. The chain is NADH-quinone oxidoreductase subunit N from Herminiimonas arsenicoxydans.